Reading from the N-terminus, the 302-residue chain is Glycine--tRNA ligase alpha subunit (302 aa).

It belongs to the class-II aminoacyl-tRNA synthetase family. As to quaternary structure, tetramer of two alpha and two beta subunits.

The protein resides in the cytoplasm. The enzyme catalyses tRNA(Gly) + glycine + ATP = glycyl-tRNA(Gly) + AMP + diphosphate. The sequence is that of Glycine--tRNA ligase alpha subunit from Haemophilus ducreyi (strain 35000HP / ATCC 700724).